A 111-amino-acid chain; its full sequence is Ig kappa chain V-III region PC 6684 (111 aa).

Residues 1 to 23 are framework-1; it reads DIVLTQSPASLAVSLGQRATISC. Cys-23 and Cys-92 are oxidised to a cystine. Residues 24–38 form a complementarity-determining-1 region; sequence RASKSVSTSGYSYMH. Residues 39–53 form a framework-2 region; it reads WYQQKPGQPPKLLIY. A complementarity-determining-2 region spans residues 54–60; it reads LASNLES. Residues 61-92 are framework-3; it reads GVPARFSGSGSGTDFTLNIHPVEEEDAATYYC. A complementarity-determining-3 region spans residues 93 to 101; it reads QHSRELPRT. The tract at residues 102–111 is framework-4; it reads FGGGTKLEIK.

The polypeptide is Ig kappa chain V-III region PC 6684 (Mus musculus (Mouse)).